Reading from the N-terminus, the 95-residue chain is Small ubiquitin-related modifier 2-A (95 aa).

K11 is covalently cross-linked (Glycyl lysine isopeptide (Lys-Gly) (interchain with G-Cter in SUMO)). In terms of domain architecture, Ubiquitin-like spans 16 to 95 (DHINLKVAGQ…VFQQQTGGSF (80 aa)). G93 is covalently cross-linked (Glycyl lysine isopeptide (Gly-Lys) (interchain with K-? in acceptor proteins)). A propeptide spanning residues 94 to 95 (SF) is cleaved from the precursor.

The protein belongs to the ubiquitin family. SUMO subfamily. Interacts with sae2 and ube2i. Covalently attached to a number of proteins, including top2. Post-translationally, polymeric chains can be formed through Lys-11 cross-linking. In terms of processing, cleavage of precursor form by a sentrin-specific protease is necessary for function.

The protein localises to the nucleus. In terms of biological role, ubiquitin-like protein that can be covalently attached to proteins as a monomer or as a lysine-linked polymer. Covalent attachment via an isopeptide bond to its substrates requires prior activation by the E1 complex sae1-sae2 and linkage to the E2 enzyme ube2i, and can be promoted by an E3 ligase such as pias1-4. This post-translational modification on lysine residues of proteins plays a crucial role in a number of cellular processes such as nuclear transport, DNA replication and repair, mitosis and signal transduction. Polymeric sumo2 chains are also susceptible to polyubiquitination which functions as a signal for proteasomal degradation of modified proteins. The chain is Small ubiquitin-related modifier 2-A (sumo2-a) from Xenopus laevis (African clawed frog).